An 89-amino-acid chain; its full sequence is Small ribosomal subunit protein uS15 (89 aa).

Belongs to the universal ribosomal protein uS15 family. Part of the 30S ribosomal subunit. Forms a bridge to the 50S subunit in the 70S ribosome, contacting the 23S rRNA.

Functionally, one of the primary rRNA binding proteins, it binds directly to 16S rRNA where it helps nucleate assembly of the platform of the 30S subunit by binding and bridging several RNA helices of the 16S rRNA. In terms of biological role, forms an intersubunit bridge (bridge B4) with the 23S rRNA of the 50S subunit in the ribosome. This Rhizobium johnstonii (strain DSM 114642 / LMG 32736 / 3841) (Rhizobium leguminosarum bv. viciae) protein is Small ribosomal subunit protein uS15.